Here is a 497-residue protein sequence, read N- to C-terminus: Probable cytosol aminopeptidase (497 aa).

Mn(2+) is bound by residues Lys264 and Asp269. The active site involves Lys276. Positions 287, 347, and 349 each coordinate Mn(2+). Residue Arg351 is part of the active site.

Belongs to the peptidase M17 family. Mn(2+) serves as cofactor.

The protein resides in the cytoplasm. The catalysed reaction is Release of an N-terminal amino acid, Xaa-|-Yaa-, in which Xaa is preferably Leu, but may be other amino acids including Pro although not Arg or Lys, and Yaa may be Pro. Amino acid amides and methyl esters are also readily hydrolyzed, but rates on arylamides are exceedingly low.. The enzyme catalyses Release of an N-terminal amino acid, preferentially leucine, but not glutamic or aspartic acids.. Its function is as follows. Presumably involved in the processing and regular turnover of intracellular proteins. Catalyzes the removal of unsubstituted N-terminal amino acids from various peptides. The protein is Probable cytosol aminopeptidase of Thermosynechococcus vestitus (strain NIES-2133 / IAM M-273 / BP-1).